The sequence spans 24 residues: 12 kDa protein (24 aa).

The sequence is that of 12 kDa protein from Mycolicibacterium smegmatis (Mycobacterium smegmatis).